The primary structure comprises 1051 residues: Ubiquitin carboxyl-terminal hydrolase 28 (1051 aa).

Residues 60–82 (DQRVKEPSHDTTAAEPSEVEESA) are disordered. Residue Ser-67 is modified to Phosphoserine. The region spanning 97–116 (DNKDDLQAAIALSLLESPNI) is the UIM domain. Residue Lys-99 forms a Glycyl lysine isopeptide (Lys-Gly) (interchain with G-Cter in SUMO2) linkage. Positions 121–135 (RDLNRAHEANSAETK) are enriched in basic and acidic residues. A disordered region spans residues 121–140 (RDLNRAHEANSAETKRSKRK). Residues 162 to 655 (VGLKNVGNTC…SAYCLMYIND (494 aa)) form the USP domain. Cys-171 acts as the Nucleophile in catalysis. The residue at position 376 (Ser-376) is a Phosphoserine. The tract at residues 483-538 (DLTPKESSSPESCSQNAGSTFSSPEDALPSSEGMNGPFTSPHSSLETPAPPAPRTV) is disordered. Composition is skewed to polar residues over residues 487-505 (KESS…TFSS) and 519-528 (PFTSPHSSLE). Position 555 is a phosphoserine (Ser-555). The Proton acceptor role is filled by His-605. A disordered region spans residues 703 to 735 (EEQSCKIPQMESSPNSSSQDFSTSQESPAVSSH). Low complexity predominate over residues 713–730 (ESSPNSSSQDFSTSQESP). Residue Ser-720 is modified to Phosphoserine. Position 1022 is a phosphothreonine (Thr-1022).

This sequence belongs to the peptidase C19 family. USP28 subfamily. In terms of assembly, interacts with ZNF304. Interacts with PRKD1. Interacts with TP53BP1. Interacts with FBXW7; following DNA damage, dissociates from FBXW7 leading to degradation of MYC. In terms of processing, degraded upon nickel ion level or hypoxia exposure. Post-translationally, phosphorylated upon DNA damage at Ser-67 and Ser-720, by ATM or ATR. Phosphorylated by PRKD1.

The protein resides in the nucleus. It is found in the nucleoplasm. It catalyses the reaction Thiol-dependent hydrolysis of ester, thioester, amide, peptide and isopeptide bonds formed by the C-terminal Gly of ubiquitin (a 76-residue protein attached to proteins as an intracellular targeting signal).. Functionally, deubiquitinase involved in DNA damage response checkpoint and MYC proto-oncogene stability. Involved in DNA damage induced apoptosis by specifically deubiquitinating proteins of the DNA damage pathway such as CLSPN. Also involved in G2 DNA damage checkpoint, by deubiquitinating CLSPN, and preventing its degradation by the anaphase promoting complex/cyclosome (APC/C). In contrast, it does not deubiquitinate PLK1. Specifically deubiquitinates MYC in the nucleoplasm, leading to prevent MYC degradation by the proteasome: acts by specifically interacting with FBXW7 (FBW7alpha) in the nucleoplasm and counteracting ubiquitination of MYC by the SCF(FBXW7) complex. Deubiquitinates ZNF304, hence preventing ZNF304 degradation by the proteasome and leading to the activated KRAS-mediated promoter hypermethylation and transcriptional silencing of tumor suppressor genes (TSGs) in a subset of colorectal cancers (CRC) cells. This is Ubiquitin carboxyl-terminal hydrolase 28 (Usp28) from Mus musculus (Mouse).